The sequence spans 316 residues: BTB/POZ domain-containing protein Y57A10B.3 (316 aa).

The signal sequence occupies residues 1–21 (MSAMRRCTCFIICLLTSYTYG). Residues N91, N107, N118, N133, N191, and N260 are each glycosylated (N-linked (GlcNAc...) asparagine). One can recognise a BTB domain in the interval 158 to 226 (RDAVLIVEGK…VHSTATFPND (69 aa)).

It is found in the secreted. The protein is BTB/POZ domain-containing protein Y57A10B.3 (btb-14) of Caenorhabditis elegans.